The sequence spans 471 residues: Plant intracellular Ras-group-related LRR protein 2 (471 aa).

Residues 106–133 adopt a coiled-coil conformation; sequence VVRLDEVHDSYEKKLKDTEEELSRVYST. LRR repeat units follow at residues 159–182, 183–205, 206–229, 231–251, 253–275, 276–298, 300–321, 324–346, 347–369, and 371–392; these read GGTV…FWKV, VGLV…ISKL, KKLE…GMLL, LRIL…IAHC, SLVE…GYGL, QNLE…ISEM, NLKY…IGRL, LEVL…ITDL, TNLR…FYRL, and KLEK…VATQ. The short motif at 393-405 is the GVYW; degenerate element; that stretch reads GAEVVREFMRKRW.

Belongs to the SHOC2 family. As to expression, widely expressed but preferentially in roots.

Its function is as follows. Leucine-rich repeat protein that likely mediates protein interactions, possibly in the context of signal transduction. The protein is Plant intracellular Ras-group-related LRR protein 2 (PIRL2) of Arabidopsis thaliana (Mouse-ear cress).